A 347-amino-acid chain; its full sequence is E3 ubiquitin-protein ligase RNF146-B (347 aa).

The segment at Cys37–Arg75 adopts an RING-type zinc-finger fold. Residues Lys85, Lys95, Lys131, and Lys176 each participate in a glycyl lysine isopeptide (Lys-Gly) (interchain with G-Cter in ubiquitin) cross-link. The WWE domain occupies Glu92–Arg168. Disordered stretches follow at residues Ser196–Leu241 and Glu257–Val347. Over residues Ser203 to Val217 the composition is skewed to low complexity. Residues Ser282 to Asp296 show a composition bias toward acidic residues. 2 positions are modified to phosphoserine: Ser288 and Ser292. Over residues His304–Asp322 the composition is skewed to polar residues.

Interacts with poly-ADP-ribosylated AXIN1, AXIN2, BLZF1 and CASC3. In terms of processing, ubiquitinated; autoubiquitinated. Autoubiquitination is enhanced upon poly(ADP-ribose)-binding.

Its subcellular location is the cytoplasm. The protein localises to the cytosol. It catalyses the reaction S-ubiquitinyl-[E2 ubiquitin-conjugating enzyme]-L-cysteine + [acceptor protein]-L-lysine = [E2 ubiquitin-conjugating enzyme]-L-cysteine + N(6)-ubiquitinyl-[acceptor protein]-L-lysine.. It functions in the pathway protein modification; protein ubiquitination. Its function is as follows. E3 ubiquitin-protein ligase that specifically binds poly-ADP-ribosylated proteins and mediates their ubiquitination and subsequent degradation. Acts as an activator of the Wnt signaling pathway by mediating the ubiquitination of poly-ADP-ribosylated AXIN1 and AXIN2, 2 key components of the beta-catenin destruction complex. Acts in cooperation with tankyrase proteins (TNKS and TNKS2), which mediate poly-ADP-ribosylation of target proteins AXIN1, AXIN2, BLZF1, CASC3, TNKS and TNKS2. Recognizes and binds tankyrase-dependent poly-ADP-ribosylated proteins via its WWE domain and mediates their ubiquitination. The polypeptide is E3 ubiquitin-protein ligase RNF146-B (RNF146B) (Bos taurus (Bovine)).